Consider the following 793-residue polypeptide: Phenylalanine--tRNA ligase beta subunit (793 aa).

One can recognise a tRNA-binding domain in the interval 39 to 148; that stretch reads AGQFTHVIVA…DEAPIGMDLR (110 aa). The 77-residue stretch at 401–477 folds into the B5 domain; that stretch reads PGTVSFLFDT…RLYGYDKLQA (77 aa). Residues aspartate 455, aspartate 461, glutamate 464, and glutamate 465 each coordinate Mg(2+). In terms of domain architecture, FDX-ACB spans 698–792; the sequence is SKYPQIRRDL…LENEFSILLR (95 aa).

Belongs to the phenylalanyl-tRNA synthetase beta subunit family. Type 1 subfamily. In terms of assembly, tetramer of two alpha and two beta subunits. It depends on Mg(2+) as a cofactor.

It is found in the cytoplasm. The catalysed reaction is tRNA(Phe) + L-phenylalanine + ATP = L-phenylalanyl-tRNA(Phe) + AMP + diphosphate + H(+). The protein is Phenylalanine--tRNA ligase beta subunit of Legionella pneumophila (strain Lens).